A 640-amino-acid polypeptide reads, in one-letter code: Threonine--tRNA ligase (640 aa).

A catalytic region spans residues 224-525; that stretch reads DHRKLGKELD…LTEHYAGAFP (302 aa). Cys-323, His-374, and His-502 together coordinate Zn(2+).

Belongs to the class-II aminoacyl-tRNA synthetase family. As to quaternary structure, homodimer. Zn(2+) serves as cofactor.

The protein localises to the cytoplasm. The catalysed reaction is tRNA(Thr) + L-threonine + ATP = L-threonyl-tRNA(Thr) + AMP + diphosphate + H(+). Catalyzes the attachment of threonine to tRNA(Thr) in a two-step reaction: L-threonine is first activated by ATP to form Thr-AMP and then transferred to the acceptor end of tRNA(Thr). Also edits incorrectly charged L-seryl-tRNA(Thr). This Tropheryma whipplei (strain TW08/27) (Whipple's bacillus) protein is Threonine--tRNA ligase.